A 213-amino-acid chain; its full sequence is Uridine kinase (213 aa).

Position 13–20 (13–20 (GGSCSGKT)) interacts with ATP.

This sequence belongs to the uridine kinase family.

Its subcellular location is the cytoplasm. It carries out the reaction uridine + ATP = UMP + ADP + H(+). The enzyme catalyses cytidine + ATP = CMP + ADP + H(+). Its pathway is pyrimidine metabolism; CTP biosynthesis via salvage pathway; CTP from cytidine: step 1/3. It functions in the pathway pyrimidine metabolism; UMP biosynthesis via salvage pathway; UMP from uridine: step 1/1. This is Uridine kinase (udk) from Mycoplasma pneumoniae (strain ATCC 29342 / M129 / Subtype 1) (Mycoplasmoides pneumoniae).